Here is a 179-residue protein sequence, read N- to C-terminus: ATP synthase subunit delta (179 aa).

The protein belongs to the ATPase delta chain family. In terms of assembly, F-type ATPases have 2 components, F(1) - the catalytic core - and F(0) - the membrane proton channel. F(1) has five subunits: alpha(3), beta(3), gamma(1), delta(1), epsilon(1). F(0) has three main subunits: a(1), b(2) and c(10-14). The alpha and beta chains form an alternating ring which encloses part of the gamma chain. F(1) is attached to F(0) by a central stalk formed by the gamma and epsilon chains, while a peripheral stalk is formed by the delta and b chains.

The protein localises to the cell inner membrane. Its function is as follows. F(1)F(0) ATP synthase produces ATP from ADP in the presence of a proton or sodium gradient. F-type ATPases consist of two structural domains, F(1) containing the extramembraneous catalytic core and F(0) containing the membrane proton channel, linked together by a central stalk and a peripheral stalk. During catalysis, ATP synthesis in the catalytic domain of F(1) is coupled via a rotary mechanism of the central stalk subunits to proton translocation. In terms of biological role, this protein is part of the stalk that links CF(0) to CF(1). It either transmits conformational changes from CF(0) to CF(1) or is implicated in proton conduction. This chain is ATP synthase subunit delta, found in Burkholderia pseudomallei (strain 1710b).